The chain runs to 764 residues: 1,4-alpha-glucan branching enzyme GlgB (764 aa).

The active-site Nucleophile is aspartate 431. Catalysis depends on glutamate 484, which acts as the Proton donor.

Belongs to the glycosyl hydrolase 13 family. GlgB subfamily. As to quaternary structure, monomer.

It carries out the reaction Transfers a segment of a (1-&gt;4)-alpha-D-glucan chain to a primary hydroxy group in a similar glucan chain.. The protein operates within glycan biosynthesis; glycogen biosynthesis. Functionally, catalyzes the formation of the alpha-1,6-glucosidic linkages in glycogen by scission of a 1,4-alpha-linked oligosaccharide from growing alpha-1,4-glucan chains and the subsequent attachment of the oligosaccharide to the alpha-1,6 position. This Synechococcus sp. (strain CC9902) protein is 1,4-alpha-glucan branching enzyme GlgB.